A 233-amino-acid chain; its full sequence is Lysine exporter LysE (233 aa).

Topologically, residues Met1–Glu2 are cytoplasmic. Residues Ile3 to Val23 form a helical membrane-spanning segment. The Periplasmic portion of the chain corresponds to Leu24–Pro65. The chain crosses the membrane as a helical span at residues Ile66 to Ala86. Residues Ala87 to Met143 are Cytoplasmic-facing. Residues Leu144 to Ile164 traverse the membrane as a helical segment. Topologically, residues Gly165–Arg176 are periplasmic. The helical transmembrane segment at Trp177 to Gly197 threads the bilayer. The Cytoplasmic portion of the chain corresponds to Ala198–Arg212. The helical transmembrane segment at Trp213–Gly233 threads the bilayer.

The protein belongs to the LysE/ArgO transporter (TC 2.A.75) family.

The protein localises to the cell inner membrane. Transport process is modulated by three forces: the membrane potential, the chemical potential of lysine, and the proton gradient. Strongly inhibited by CCCP and valinomycin. Catalyzes the efflux of L-lysine. Can also export L-arginine and L-citrulline. The lysEG system prevents bacteriostasis due to elevated L-lysine or L-arginine concentrations that arise during growth in the presence of peptides or in mutants possessing a deregulated biosynthesis pathway. In vitro, can also export D-lysine during biotechnological production of D-amino acids. The chain is Lysine exporter LysE from Corynebacterium glutamicum (strain ATCC 13032 / DSM 20300 / JCM 1318 / BCRC 11384 / CCUG 27702 / LMG 3730 / NBRC 12168 / NCIMB 10025 / NRRL B-2784 / 534).